The chain runs to 677 residues: uncharacterized protein (677 aa).

3 helical membrane-spanning segments follow: residues 80 to 102 (ILSLFATLVLMVGVFFCAPRASF), 338 to 360 (ALLSNASGAFVIAQAVPVLLFGF), and 367 to 386 (LVAMVAVVTTFLLVFQLLSL). Residues 523 to 556 (DEAASLPSDSSPEEDLDPLEEVESIEGTAEESTR) are disordered. Residues 533-546 (SPEEDLDPLEEVES) are compositionally biased toward acidic residues.

The protein resides in the cell membrane. This is an uncharacterized protein from Treponema pallidum (strain Nichols).